A 697-amino-acid chain; its full sequence is MANKREFPLERTRNIGIMAHIDAGKTTTTERILYYTGKIHKIGETHEGASQMDWMAQEQERGITITSAATTAAWKNHRINIIDTPGHVDFTIEVERSLRVLDGAVAVLDAQAGVEPQTETVWRQASDYDVPRIVFANKMDKLGADFDFSVQSIHDRLQANALPIQMPIGAEDDFQGIIDLVEMKADLYDVDELGTEWETVDVPDEYKEEAEKRRNEMIEQLADIDENIMEKYLGGEDISVAEIKAAIRKGTLALELFPVLAGSAFKNKGVQMMLDAVVDYLPSPLDVKPYSATDPETGDQVELIAGDDKSFAALAFKVATDPFVGRLTFIRVYQGTLESGSYVLNATKGKRERVGRLLQMHSNQRQEIPEVFSGDIAAAIGLKNTTTGDSLTDPAHPLQLESMVFPDPVIEVAVEPKSKADQDKMDIALQKLAEEDPSFRAETNPETGETVIAGMGELHLDIIVDRMKREFNVEATIGAPQVSYREAFTKKTSAQGKFVRQSGGKGQYGDVWVEFEPNEEGKGFEFEDAIVGGVVPREYIPSVEEGLREAMNNGVLAGYPLVDVKAKLYDGSYHDVDSSEAAFKVAASLALRAAAKTAAPVILEPIMKVEIRVPEEYMGDIMGQVTARRGRVDGMEAIAGAEEIHAFVPLSEMFGYATTLRSASQGRGTFTMTFDHYEAVPKSIQEEIIKKNGGHAE.

The region spanning Glu10–Leu285 is the tr-type G domain. Residues Ala19–Thr26, Asp83–His87, and Asn137–Asp140 each bind GTP.

This sequence belongs to the TRAFAC class translation factor GTPase superfamily. Classic translation factor GTPase family. EF-G/EF-2 subfamily.

It localises to the cytoplasm. Functionally, catalyzes the GTP-dependent ribosomal translocation step during translation elongation. During this step, the ribosome changes from the pre-translocational (PRE) to the post-translocational (POST) state as the newly formed A-site-bound peptidyl-tRNA and P-site-bound deacylated tRNA move to the P and E sites, respectively. Catalyzes the coordinated movement of the two tRNA molecules, the mRNA and conformational changes in the ribosome. The protein is Elongation factor G of Pediococcus pentosaceus (strain ATCC 25745 / CCUG 21536 / LMG 10740 / 183-1w).